We begin with the raw amino-acid sequence, 1053 residues long: Probable dihydropyrimidine dehydrogenase [NADP(+)] (1053 aa).

The region spanning Glu84–Phe115 is the 4Fe-4S ferredoxin-type 1 domain. [4Fe-4S] cluster-binding residues include Cys94, Cys97, Cys102, Cys106, Cys145, Cys151, Cys155, and Gln171. FAD-binding positions include Gly207 to Ala211, Glu231 to Leu239, Arg248, and Leu274. Residues Ala354–Thr357, Arg378–Lys379, Arg385, Ala451–Gly453, and Asp495–Glu501 each bind NADP(+). Gly494–Thr503 serves as a coordination point for FAD. FMN contacts are provided by residues Ser574 and Lys598–Thr599. Residues Asn633 and Asn692 to Ser694 each bind substrate. Cys695 functions as the Proton acceptor in the catalytic mechanism. Lys733 contacts FMN. Asn760–Thr761 contributes to the substrate binding site. Residues Gly791, Thr817–Gly819, and Cys840–Ser841 each bind FMN. 4Fe-4S ferredoxin-type domains are found at residues Glu949–Val981 and His983–Arg1013. [4Fe-4S] cluster is bound by residues Cys958, Cys961, Cys964, Cys968, Cys992, Cys995, Cys998, and Cys1002.

Belongs to the dihydropyrimidine dehydrogenase family. It depends on [4Fe-4S] cluster as a cofactor. FAD serves as cofactor. FMN is required as a cofactor.

The enzyme catalyses 5,6-dihydrouracil + NADP(+) = uracil + NADPH + H(+). The protein operates within amino-acid biosynthesis; beta-alanine biosynthesis. In terms of biological role, involved in pyrimidine base degradation. Catalyzes the reduction of uracil and thymine. Also involved the degradation of the chemotherapeutic drug 5-fluorouracil. This is Probable dihydropyrimidine dehydrogenase [NADP(+)] from Caenorhabditis briggsae.